The sequence spans 465 residues: Pleckstrin homology domain-containing family S member 1 (465 aa).

Positions 14 to 129 constitute a PH domain; the sequence is EVCKQDYFIK…WVSFMSSFRQ (116 aa). Over residues 159–173 the composition is skewed to polar residues; the sequence is PSSTSEAVGSSSPRN. 2 disordered regions span residues 159 to 179 and 258 to 283; these read PSSTSEAVGSSSPRNGLQDKH and ETSHESVDSSKEEPQTLPETQDGDLH. Basic and acidic residues predominate over residues 258 to 271; the sequence is ETSHESVDSSKEEP.

This is Pleckstrin homology domain-containing family S member 1 from Homo sapiens (Human).